Here is a 96-residue protein sequence, read N- to C-terminus: uncharacterized protein (96 aa).

The CBS domain occupies 57–96 (MTKKVRTTKKDASISDAAALMDKHNVNRLPVVDENNKLVL).

This is an uncharacterized protein from Methanobacterium ivanovii.